The primary structure comprises 33 residues: Sucrose-6-phosphate hydrolase (33 aa).

Substrate is bound at residue proline 15–glutamate 18. Residue glutamate 18 is part of the active site.

Belongs to the glycosyl hydrolase 32 family.

The catalysed reaction is Hydrolysis of terminal non-reducing beta-D-fructofuranoside residues in beta-D-fructofuranosides.. The protein operates within glycan biosynthesis; sucrose metabolism. In Fusobacterium mortiferum, this protein is Sucrose-6-phosphate hydrolase.